A 463-amino-acid polypeptide reads, in one-letter code: GTPase Der (463 aa).

Positions 1–20 are disordered; that stretch reads MDEGDEDLISGRGFTEGARK. EngA-type G domains are found at residues 27–190 and 202–375; these read GVLA…KQAE and RRVA…ESWD. GTP is bound by residues 33–40, 80–84, 142–145, 208–215, 255–259, and 320–323; these read GRPNVGKS, DTGGW, NKID, DTAGI, and NKWD. Residues 376 to 458 form the KH-like domain; sequence QRIPTGKLNA…PIQISVNIRE (83 aa).

It belongs to the TRAFAC class TrmE-Era-EngA-EngB-Septin-like GTPase superfamily. EngA (Der) GTPase family. In terms of assembly, associates with the 50S ribosomal subunit.

Its function is as follows. GTPase that plays an essential role in the late steps of ribosome biogenesis. The sequence is that of GTPase Der from Bifidobacterium longum (strain NCC 2705).